A 542-amino-acid polypeptide reads, in one-letter code: Protein phosphatase 1G (542 aa).

Glycine 2 is lipidated: N-myristoyl glycine. Arginine 22 bears the Omega-N-methylarginine mark. One can recognise a PPM-type phosphatase domain in the interval 26-502 (PYGFSAMQGW…DNMTCIIICF (477 aa)). Mn(2+)-binding residues include aspartate 60 and glycine 61. 2 disordered regions span residues 118 to 139 (AGRP…DVDN) and 162 to 325 (QNCQ…SDSG). Position 122 is a phosphothreonine (threonine 122). Composition is skewed to acidic residues over residues 123–139 (EDED…DVDN) and 259–309 (DSED…DEEM). Lysine 380 bears the N6-acetyllysine mark. Mn(2+)-binding residues include aspartate 438 and aspartate 493. Positions 510–542 (LQPESGKRKLEEALSTEGAEENGNSDKKKAKRD) are disordered. Residue serine 524 is modified to Phosphoserine.

Belongs to the PP2C family. As to quaternary structure, interacts with NOL3; may dephosphorylate NOL3. The cofactor is Mg(2+). Requires Mn(2+) as cofactor.

It localises to the cytoplasm. Its subcellular location is the membrane. The catalysed reaction is O-phospho-L-seryl-[protein] + H2O = L-seryl-[protein] + phosphate. It carries out the reaction O-phospho-L-threonyl-[protein] + H2O = L-threonyl-[protein] + phosphate. The protein is Protein phosphatase 1G of Rattus norvegicus (Rat).